A 160-amino-acid polypeptide reads, in one-letter code: Respiratory supercomplex factor 1, mitochondrial (160 aa).

The HIG1 domain maps to 5 to 96; that stretch reads PSSFDGAEQD…TSQKERQSKE (92 aa). 2 helical membrane passes run 33 to 50 and 63 to 85; these read LVPL…LAAQ and YFRW…SFIY. A coiled-coil region spans residues 86-160; that stretch reads GTSQKERQSK…DLQAKTSSSK (75 aa). Residues 135–160 form a disordered region; sequence AKELEQETQGLQQELRDLQAKTSSSK.

Belongs to the RCF1 family. As to quaternary structure, associates with the respiratory chain complex III/complex IV supercomplex.

Its subcellular location is the mitochondrion membrane. Functionally, cytochrome c oxidase subunit which plays a role in assembly of respiratory supercomplexes. The protein is Respiratory supercomplex factor 1, mitochondrial (RCF1) of Lachancea thermotolerans (strain ATCC 56472 / CBS 6340 / NRRL Y-8284) (Yeast).